The sequence spans 429 residues: Putative F-box/kelch-repeat protein At2g21680 (429 aa).

The disordered stretch occupies residues 1 to 32 (MVLISETSDDGSTGGDHQIKKPKKEEDRNKKL). Residues 17 to 29 (HQIKKPKKEEDRN) show a composition bias toward basic and acidic residues. An F-box domain is found at 37-84 (QVSLPIPEELILRCFLLVRRCHHPSLSLVCRSFHSLMSKLYDDRLRLG). Kelch repeat units follow at residues 144–175 (DIYV…RRGE), 176–221 (TSIR…VIDG), 222–267 (KIYV…LTYA), 269–313 (MKEK…VVDN), and 315–359 (LFCI…DGYK).

This chain is Putative F-box/kelch-repeat protein At2g21680, found in Arabidopsis thaliana (Mouse-ear cress).